The primary structure comprises 499 residues: Lysine--tRNA ligase (499 aa).

2 residues coordinate Mg(2+): Glu-407 and Glu-414.

This sequence belongs to the class-II aminoacyl-tRNA synthetase family. As to quaternary structure, homodimer. It depends on Mg(2+) as a cofactor.

It localises to the cytoplasm. It catalyses the reaction tRNA(Lys) + L-lysine + ATP = L-lysyl-tRNA(Lys) + AMP + diphosphate. This Lactiplantibacillus plantarum (strain ATCC BAA-793 / NCIMB 8826 / WCFS1) (Lactobacillus plantarum) protein is Lysine--tRNA ligase.